Reading from the N-terminus, the 482-residue chain is Putative alpha-L-fucosidase (482 aa).

A signal peptide spans 1-16 (MIFLIFSILFLHLANC). N182, N343, N359, and N419 each carry an N-linked (GlcNAc...) asparagine glycan.

This sequence belongs to the glycosyl hydrolase 29 family.

The catalysed reaction is an alpha-L-fucoside + H2O = L-fucose + an alcohol. Its function is as follows. Alpha-L-fucosidase is responsible for hydrolyzing the alpha-1,6-linked fucose joined to the reducing-end N-acetylglucosamine of the carbohydrate moieties of glycoproteins. The protein is Putative alpha-L-fucosidase of Caenorhabditis elegans.